Reading from the N-terminus, the 96-residue chain is Transcription and mRNA export factor ENY2 (96 aa).

This sequence belongs to the ENY2 family. As to quaternary structure, component of the nuclear pore complex (NPC)-associated TREX-2 complex (transcription and export complex 2). Component of the SAGA transcription coactivator-HAT complex. Within the SAGA complex, participates in a subcomplex of SAGA called the DUB module (deubiquitination module).

It is found in the nucleus. Its subcellular location is the nucleoplasm. Functionally, involved in mRNA export coupled transcription activation by association with both the TREX-2 and the SAGA complexes. The transcription regulatory histone acetylation (HAT) complex SAGA is a multiprotein complex that activates transcription by remodeling chromatin and mediating histone acetylation and deubiquitination. Within the SAGA complex, participates in a subcomplex that specifically deubiquitinates histones. The SAGA complex is recruited to specific gene promoters by activators, where it is required for transcription. The TREX-2 complex functions in docking export-competent ribonucleoprotein particles (mRNPs) to the nuclear entrance of the nuclear pore complex (nuclear basket). TREX-2 participates in mRNA export and accurate chromatin positioning in the nucleus by tethering genes to the nuclear periphery. This is Transcription and mRNA export factor ENY2 from Taeniopygia guttata (Zebra finch).